The following is a 70-amino-acid chain: MPEWRTCSFCGYEIEPGKGKMVVEKDGTVLYFCSSKCEKSYRMGRNPRKLKWTKVYQDMKAELKKAQESQ.

Positions 7, 10, 33, and 37 each coordinate Zn(2+). The segment at 7–37 (CSFCGYEIEPGKGKMVVEKDGTVLYFCSSKC) adopts a C4-type zinc-finger fold.

This sequence belongs to the eukaryotic ribosomal protein eL24 family. In terms of assembly, part of the 50S ribosomal subunit. Forms a cluster with proteins L3 and L14. It depends on Zn(2+) as a cofactor.

Functionally, binds to the 23S rRNA. In Methanocaldococcus jannaschii (strain ATCC 43067 / DSM 2661 / JAL-1 / JCM 10045 / NBRC 100440) (Methanococcus jannaschii), this protein is Large ribosomal subunit protein eL24.